The sequence spans 275 residues: DNA repair protein RecO (275 aa).

Positions 1–38 are disordered; the sequence is MTDEADADPQPFAAPPATGAPAADKPARKPRRAAPRTS. Residues 8–24 show a composition bias toward low complexity; the sequence is DPQPFAAPPATGAPAAD.

It belongs to the RecO family.

Functionally, involved in DNA repair and RecF pathway recombination. This chain is DNA repair protein RecO, found in Burkholderia pseudomallei (strain 1710b).